Here is a 155-residue protein sequence, read N- to C-terminus: Ribosome maturation factor RimP (155 aa).

The protein belongs to the RimP family.

Its subcellular location is the cytoplasm. In terms of biological role, required for maturation of 30S ribosomal subunits. The protein is Ribosome maturation factor RimP of Gemmatimonas aurantiaca (strain DSM 14586 / JCM 11422 / NBRC 100505 / T-27).